We begin with the raw amino-acid sequence, 133 residues long: Fatty acid-binding protein, heart (133 aa).

Ala-2 bears the N-acetylalanine mark. The residue at position 8 (Thr-8) is a Phosphothreonine. Tyr-20 carries the phosphotyrosine; by Tyr-kinases modification. Phosphoserine is present on Ser-23. Residue Thr-30 is modified to Phosphothreonine. Ser-83 is modified (phosphoserine). Position 127-129 (127-129) interacts with (9Z)-octadecenoate; the sequence is RTY. 127–129 contributes to the hexadecanoate binding site; the sequence is RTY. 127–129 serves as a coordination point for octadecanoate; the sequence is RTY.

This sequence belongs to the calycin superfamily. Fatty-acid binding protein (FABP) family.

The protein resides in the cytoplasm. Functionally, FABPs are thought to play a role in the intracellular transport of long-chain fatty acids and their acyl-CoA esters. FABPs are important elements related to the hibernating state in mammals. The protein is Fatty acid-binding protein, heart (FABP3) of Myotis lucifugus (Little brown bat).